We begin with the raw amino-acid sequence, 445 residues long: Peptide chain release factor 1, mitochondrial (445 aa).

The N-terminal 61 residues, 1–61 (MNRHLCVWLF…LLSKNWSRRY (61 aa)), are a transit peptide targeting the mitochondrion. The GGQ domain stretch occupies residues 297–361 (PKDLRIDTFR…LRARLYQQII (65 aa)). The GGQ motif lies at 311–313 (GGQ). Gln313 carries the post-translational modification N5-methylglutamine.

This sequence belongs to the prokaryotic/mitochondrial release factor family. In terms of processing, methylation of glutamine in the GGQ triplet by HEMK1 is conserved from bacteria to mammals.

It is found in the mitochondrion. In terms of biological role, mitochondrial peptide chain release factor that directs the termination of translation in response to the peptide chain non-canonical stop codons AGG and AGA. Non-canonical termination codons AGG and AGA are found at the end of MT-CO1/COX1 and MT-ND6/ND6 open reading frames, respectively. Recognizes non-canonical stop codons via a network of interactions between the codon, MTRF1 and the ribosomal RNA (rRNA): in contrast to other translation release factors, which identify the codon in the A-site via direct interactions of amino acid side chains with the bases, MTRF1 repositions the first 2 bases of the stop codon to use an intricate network of interactions that includes residues of the release factor, the rRNA of the small ribosomal subunit, as well as neighboring bases of the mRNA. This Homo sapiens (Human) protein is Peptide chain release factor 1, mitochondrial.